Consider the following 321-residue polypeptide: Glutamyl-Q tRNA(Asp) synthetase (321 aa).

L-glutamate-binding positions include 25 to 29 and E61; that span reads RFAPS. The 'HIGH' region signature appears at 28–38; sequence PSPSGDLHFGS. Zn(2+) is bound by residues C117, C119, Y131, and C135. L-glutamate is bound by residues Y188 and R206. The 'KMSKS' region signature appears at 244 to 248; it reads KLSKQ. ATP is bound at residue K247.

This sequence belongs to the class-I aminoacyl-tRNA synthetase family. GluQ subfamily. Zn(2+) serves as cofactor.

Its function is as follows. Catalyzes the tRNA-independent activation of glutamate in presence of ATP and the subsequent transfer of glutamate onto a tRNA(Asp). Glutamate is transferred on the 2-amino-5-(4,5-dihydroxy-2-cyclopenten-1-yl) moiety of the queuosine in the wobble position of the QUC anticodon. The protein is Glutamyl-Q tRNA(Asp) synthetase of Yersinia pestis.